Here is a 198-residue protein sequence, read N- to C-terminus: Glycerol-3-phosphate acyltransferase (198 aa).

The next 5 helical transmembrane spans lie at 4–24 (LALI…AVLI), 53–75 (SAAG…GGYF), 80–102 (PFML…FFHF), 112–132 (LGAL…CWVV), and 134–154 (VLVT…APLF).

It belongs to the PlsY family. As to quaternary structure, probably interacts with PlsX.

The protein resides in the cell inner membrane. The catalysed reaction is an acyl phosphate + sn-glycerol 3-phosphate = a 1-acyl-sn-glycero-3-phosphate + phosphate. The protein operates within lipid metabolism; phospholipid metabolism. Functionally, catalyzes the transfer of an acyl group from acyl-phosphate (acyl-PO(4)) to glycerol-3-phosphate (G3P) to form lysophosphatidic acid (LPA). This enzyme utilizes acyl-phosphate as fatty acyl donor, but not acyl-CoA or acyl-ACP. This chain is Glycerol-3-phosphate acyltransferase, found in Aliivibrio fischeri (strain ATCC 700601 / ES114) (Vibrio fischeri).